We begin with the raw amino-acid sequence, 274 residues long: MNKTAIALLALLASSASLAATPWQKITQPVPGSAQSIGSFSNGCIVGADTLPIQSEHYQVMRTDQRRYFGHPDLVMFIQRLSRQVSNLGMGTVLIGDMGMPAGGRFNGGHASHQTGLDVDIFLQLPKTRWTSAQLLRPQALDLVSRDGKHVVPALWKPEIFSLIKLAAQDKDVTRIFVNPAIKQQLCLDAGTDRDWLRKVRPWFQHRAHMHVRLRCPADSLECEDQPLPPPGDGCGAELQSWFEPPKPGTTKPEKKTPPPLPPSCQALLDEHVI.

The signal sequence occupies residues 1 to 19 (MNKTAIALLALLASSASLA). Disulfide bonds link Cys-44–Cys-265, Cys-187–Cys-235, and Cys-216–Cys-223. Residues His-110, His-113, Asp-120, Asp-147, His-150, and His-211 each contribute to the Zn(2+) site. Positions 227-274 (PLPPPGDGCGAELQSWFEPPKPGTTKPEKKTPPPLPPSCQALLDEHVI) are disordered.

Belongs to the peptidase M74 family. As to quaternary structure, dimer. The cofactor is Zn(2+).

The protein resides in the periplasm. Its function is as follows. Murein endopeptidase that cleaves the D-alanyl-meso-2,6-diamino-pimelyl amide bond that connects peptidoglycan strands. Likely plays a role in the removal of murein from the sacculus. The chain is Penicillin-insensitive murein endopeptidase from Escherichia coli O1:K1 / APEC.